Here is a 695-residue protein sequence, read N- to C-terminus: Exocyst complex component EXO70C2 (695 aa).

Over residues 1–36 the composition is skewed to basic and acidic residues; it reads MEKNDKDPDHDDKSKGDEKGDVVSDAHPSDDAHHQD. Disordered regions lie at residues 1–71 and 210–229; these read MEKN…EEAP and VVTD…QDHQ. Thr-212 carries the post-translational modification Phosphothreonine. Phosphoserine occurs at positions 215 and 217. Residue Thr-446 is modified to Phosphothreonine. Phosphoserine occurs at positions 494 and 605.

Belongs to the EXO70 family. Interacts with ROH1A and ROH1D independently of its phosphorylation status. Phosphorylation on Ser and Thr residues promotes its ability to repress pollen tube growth and to regulate cellular architecture at the pollen tube tip. In terms of tissue distribution, expressed in anthers, pollen and root trichoblast cells. Also observed in anther tapetum.

It is found in the cytoplasm. Required for optimal tip growth of pollen tube; dose-dependent negative regulator of exocyst function in pollen tube growth and cellular architecture at the pollen tube tip, probably by modulating membrane trafficking and exocytosis dynamics. The protein is Exocyst complex component EXO70C2 of Arabidopsis thaliana (Mouse-ear cress).